The following is a 122-amino-acid chain: Large ribosomal subunit protein uL14 (122 aa).

This sequence belongs to the universal ribosomal protein uL14 family. In terms of assembly, part of the 50S ribosomal subunit. Forms a cluster with proteins L3 and L19. In the 70S ribosome, L14 and L19 interact and together make contacts with the 16S rRNA in bridges B5 and B8.

Functionally, binds to 23S rRNA. Forms part of two intersubunit bridges in the 70S ribosome. The polypeptide is Large ribosomal subunit protein uL14 (Malacoplasma penetrans (strain HF-2) (Mycoplasma penetrans)).